Reading from the N-terminus, the 239-residue chain is Norbelladine 4'-O-methyltransferase 5 (239 aa).

S-adenosyl-L-methionine contacts are provided by residues V55, E77, 79–80 (GV), S85, D103, and A132. Position 155 (D155) interacts with a divalent metal cation. S-adenosyl-L-methionine is bound at residue D157. The a divalent metal cation site is built by D181 and N182.

It belongs to the class I-like SAM-binding methyltransferase superfamily. Cation-dependent O-methyltransferase family. Mg(2+) is required as a cofactor.

It catalyses the reaction norbelladine + S-adenosyl-L-methionine = 4'-O-methylnorbelladine + S-adenosyl-L-homocysteine + H(+). Its pathway is alkaloid biosynthesis. Functionally, 4'-O-methyltransferase converting norbelladine to 4'-O-methylnorbelladine. 4'-O-methylnorbelladine is a precursor to all Amaryllidaceae alkaloids such as galanthamine, lycorine and haemanthamine, and including haemanthamine- and crinamine-type alkaloids, promising anticancer agents. The sequence is that of Norbelladine 4'-O-methyltransferase 5 from Narcissus aff. pseudonarcissus MK-2014 (Daffodil).